The primary structure comprises 539 residues: Cytochrome c oxidase subunit 1 homolog, bacteroid (539 aa).

3 consecutive transmembrane segments (helical) span residues 4–24, 28–48, and 75–95; these read TVEMVVLSVGAFLALVGAGLA, LFGAHMWVLFFALLAGTLVLM, and GVVATVFWGVVGFLVGVVVAL. H117 serves as a coordination point for heme b. Transmembrane regions (helical) follow at residues 118–138, 154–174, 187–207, 214–234, 265–285, 298–318, 330–350, and 368–388; these read TSAVIFAFGGNALIATSFYVV, FVFWGYQLFIVLAASGYLLGI, VDLWLTIVWVAYLVAFLGTIM, IYVANWFYLAFIVTIAMLHVV, GHNAVGFFLTAGFLAMMYYFI, LSIIHFWAIIFMYIWAGPHHL, LGMVFSIMLWMPSWGGMINGL, and MMVMAVAFYGMATFEGPMMSI. Positions 266, 316, and 317 each coordinate Cu cation. Residues H404 and H406 each coordinate heme b. 4 consecutive transmembrane segments (helical) span residues 405-425, 443-463, 475-495, and 499-519; these read VHSGALGWNGLITFGAIYYLV, HFWLATLGIVVYAAVMWVAGI, QGFLVYSFAETVAAMFPYYVM, and GGALFLAGALLMAFNVTMTIL.

The protein belongs to the heme-copper respiratory oxidase family. Cu(2+) is required as a cofactor. Heme b serves as cofactor.

The protein localises to the cell membrane. The enzyme catalyses 4 Fe(II)-[cytochrome c] + O2 + 8 H(+)(in) = 4 Fe(III)-[cytochrome c] + 2 H2O + 4 H(+)(out). The protein operates within energy metabolism; oxidative phosphorylation. In terms of biological role, cytochrome c oxidase is the component of the respiratory chain that catalyzes the reduction of oxygen to water. Subunits 1-3 form the functional core of the enzyme complex. Co I is the catalytic subunit of the enzyme. Electrons originating in cytochrome c or a quinol are transferred to the bimetallic center formed by a high-spin heme and copper B. This chain is Cytochrome c oxidase subunit 1 homolog, bacteroid (fixN), found in Rhizobium meliloti (strain 1021) (Ensifer meliloti).